A 644-amino-acid polypeptide reads, in one-letter code: Arabinosyltransferase XEG113 (644 aa).

Residues 1–17 (MVEGWRNGFRDATNSKP) are Cytoplasmic-facing. Residues 18-38 (LFVTIYATVIIGVLVSSFYVF) traverse the membrane as a helical; Signal-anchor for type II membrane protein segment. Residues 39–644 (SAIYSPTNGS…QTPEEDHPPL (606 aa)) lie on the Lumenal side of the membrane. Asn-46 and Asn-70 each carry an N-linked (GlcNAc...) asparagine glycan. A DXD motif motif is present at residues 226–228 (DTD). Residues Asn-446 and Asn-542 are each glycosylated (N-linked (GlcNAc...) asparagine).

The protein belongs to the glycosyltransferase 77 family.

The protein resides in the golgi apparatus membrane. Plays a role in the arabinosylation of cell wall components. Involved in the arabinosylation of extensin proteins in root hair cells. Extensins are structural glycoproteins present in cell walls and its arabinosylation is important for cell elongation, root hair cell development, lateral root development and root hair tip growth. The sequence is that of Arabinosyltransferase XEG113 from Arabidopsis thaliana (Mouse-ear cress).